The primary structure comprises 637 residues: Threonine--tRNA ligase (637 aa).

Positions 1–61 constitute a TGS domain; that stretch reads MITITLPDSS…ATDAAVRLIT (61 aa). Residues 238 to 528 form a catalytic region; it reads DHRKLGAELD…LIEHFAGKFP (291 aa). 3 residues coordinate Zn(2+): Cys-329, His-380, and His-505.

This sequence belongs to the class-II aminoacyl-tRNA synthetase family. As to quaternary structure, homodimer. Requires Zn(2+) as cofactor.

The protein resides in the cytoplasm. The catalysed reaction is tRNA(Thr) + L-threonine + ATP = L-threonyl-tRNA(Thr) + AMP + diphosphate + H(+). In terms of biological role, catalyzes the attachment of threonine to tRNA(Thr) in a two-step reaction: L-threonine is first activated by ATP to form Thr-AMP and then transferred to the acceptor end of tRNA(Thr). Also edits incorrectly charged L-seryl-tRNA(Thr). The chain is Threonine--tRNA ligase from Desulfosudis oleivorans (strain DSM 6200 / JCM 39069 / Hxd3) (Desulfococcus oleovorans).